A 72-amino-acid chain; its full sequence is Protein RALF-like 20 (72 aa).

The first 27 residues, 1–27 (MVLSKKTIMQSFALMIILSIVMSTTEA), serve as a signal peptide directing secretion. 2 disulfide bridges follow: Cys43–Cys51 and Cys63–Cys69.

Belongs to the plant rapid alkalinization factor (RALF) family.

It is found in the secreted. In terms of biological role, cell signaling peptide that may regulate plant stress, growth, and development. Mediates a rapid alkalinization of extracellular space by mediating a transient increase in the cytoplasmic Ca(2+) concentration leading to a calcium-dependent signaling events through a cell surface receptor and a concomitant activation of some intracellular mitogen-activated protein kinases. The sequence is that of Protein RALF-like 20 (RALFL20) from Arabidopsis thaliana (Mouse-ear cress).